The primary structure comprises 436 residues: MSTKPEKPIWMSQEDYDRQYGSITGDESSTVSKKDSKVTANAPGDGNGSLPVLQSSSILTSKVSDLPIEAESGFKIQKRRHERYDQEERLRKQRAQKLREEQLKRHEIEMTANRSINVDQIVREHYNERTIIANRAKRNLSPIIKLRNFNNAIKYMLIDKYTKPGDVVLELGCGKGGDLRKYGAAGISQFIGIDISNASIQEAHKRYRSMRNLDYQVVLITGDCFGESLGVAVEPFPDCRFPCDIVSTQFCLHYAFETEEKARRALLNVAKSLKIGGHFFGTIPDSEFIRYKLNKFPKEVEKPSWGNSIYKVTFENNSYQKNDYEFTSPYGQMYTYWLEDAIDNVPEYVVPFETLRSLADEYGLELVSQMPFNKFFVQEIPKWIERFSPKMREGLQRSDGRYGVEGDEKEAASYFYTMFAFRKVKQYIEPESVKPN.

The tract at residues 1 to 50 (MSTKPEKPIWMSQEDYDRQYGSITGDESSTVSKKDSKVTANAPGDGNGSL) is disordered. An mRNA cap 0 methyltransferase domain is found at 141–424 (SPIIKLRNFN…FYTMFAFRKV (284 aa)). 150-151 (NN) lines the mRNA pocket. The S-adenosyl-L-methionine site is built by Lys-154, Gly-172, Asp-194, Asp-223, Gln-249, and Tyr-254.

The protein belongs to the class I-like SAM-binding methyltransferase superfamily. mRNA cap 0 methyltransferase family.

The protein localises to the nucleus. It carries out the reaction a 5'-end (5'-triphosphoguanosine)-ribonucleoside in mRNA + S-adenosyl-L-methionine = a 5'-end (N(7)-methyl 5'-triphosphoguanosine)-ribonucleoside in mRNA + S-adenosyl-L-homocysteine. In terms of biological role, responsible for methylating the 5'-cap structure of mRNAs. The polypeptide is mRNA cap guanine-N(7) methyltransferase (ABD1) (Saccharomyces cerevisiae (strain ATCC 204508 / S288c) (Baker's yeast)).